Reading from the N-terminus, the 141-residue chain is Hemoglobin subunit alpha (141 aa).

In terms of domain architecture, Globin spans 1-141; sequence VLSPADKTNV…VSTVLTSKYR (141 aa). S3 is modified (phosphoserine). An N6-succinyllysine modification is found at K7. At T8 the chain carries Phosphothreonine. Position 11 is an N6-succinyllysine (K11). The residue at position 16 (K16) is an N6-acetyllysine; alternate. K16 is modified (N6-succinyllysine; alternate). Residue Y24 is modified to Phosphotyrosine. S35 is modified (phosphoserine). K40 carries the N6-succinyllysine modification. Residue S49 is modified to Phosphoserine. Position 58 (H58) interacts with O2. H87 contacts heme b. A Phosphoserine modification is found at S102. A Phosphothreonine modification is found at T108. A phosphoserine mark is found at S124 and S131. T134 and T137 each carry phosphothreonine. S138 bears the Phosphoserine mark.

Belongs to the globin family. Heterotetramer of two alpha chains and two beta chains. Red blood cells.

Its function is as follows. Involved in oxygen transport from the lung to the various peripheral tissues. The chain is Hemoglobin subunit alpha from Otospermophilus beecheyi (California ground squirrel).